Here is a 180-residue protein sequence, read N- to C-terminus: Ribulose bisphosphate carboxylase small subunit, chloroplastic 3 (180 aa).

The transit peptide at 1–56 directs the protein to the chloroplast; the sequence is MASSVMSSAAVATRGNGAQASMVAPFTGLKSTASFPVSRKQNLDITSIASNGGRVS.

It belongs to the RuBisCO small chain family. Heterohexadecamer of 8 large and 8 small subunits. In terms of assembly, (Microbial infection) Binds to tobamovirus movement protein; this interaction seems required for viral systemic movement.

It localises to the plastid. It is found in the chloroplast. Its subcellular location is the cell junction. The protein resides in the plasmodesma. RuBisCO catalyzes two reactions: the carboxylation of D-ribulose 1,5-bisphosphate, the primary event in carbon dioxide fixation, as well as the oxidative fragmentation of the pentose substrate. Both reactions occur simultaneously and in competition at the same active site. Although the small subunit is not catalytic it is essential for maximal activity. Involved in antiviral defenses. In Solanum lycopersicum (Tomato), this protein is Ribulose bisphosphate carboxylase small subunit, chloroplastic 3.